A 283-amino-acid polypeptide reads, in one-letter code: Undecaprenyl-diphosphatase (283 aa).

Transmembrane regions (helical) follow at residues 4 to 24 (LLILKAVIMGIVEGITEFLPI), 45 to 65 (ADLFIVVIQLGAILAVIYEYW), 91 to 111 (QLGLSLIVATIPVMLVGFTLA), 118 to 138 (LFNPYTVAIMLILGGLLIFYV), 153 to 173 (VSLKTALLIGLMQCLALIPGT), 194 to 214 (AEFSFFLGIPVIIGAGLLDLL), 228 to 248 (ILGVGVLVSFVVGLLCIRWLV), and 258 to 278 (IFAWLRIITGIIVLLVAWIFG).

It belongs to the UppP family.

It localises to the cell inner membrane. The catalysed reaction is di-trans,octa-cis-undecaprenyl diphosphate + H2O = di-trans,octa-cis-undecaprenyl phosphate + phosphate + H(+). Catalyzes the dephosphorylation of undecaprenyl diphosphate (UPP). Confers resistance to bacitracin. The protein is Undecaprenyl-diphosphatase of Psychrobacter sp. (strain PRwf-1).